The following is a 173-amino-acid chain: Small ribosomal subunit protein uS5 (173 aa).

Residues Trp-17 to Val-80 form the S5 DRBM domain.

Belongs to the universal ribosomal protein uS5 family. Part of the 30S ribosomal subunit. Contacts proteins S4 and S8.

With S4 and S12 plays an important role in translational accuracy. Functionally, located at the back of the 30S subunit body where it stabilizes the conformation of the head with respect to the body. This chain is Small ribosomal subunit protein uS5, found in Rippkaea orientalis (strain PCC 8801 / RF-1) (Cyanothece sp. (strain PCC 8801)).